Here is a 254-residue protein sequence, read N- to C-terminus: Trans-aconitate 2-methyltransferase (254 aa).

It belongs to the methyltransferase superfamily. Tam family.

The protein resides in the cytoplasm. It carries out the reaction trans-aconitate + S-adenosyl-L-methionine = (E)-3-(methoxycarbonyl)pent-2-enedioate + S-adenosyl-L-homocysteine. Catalyzes the S-adenosylmethionine monomethyl esterification of trans-aconitate. This is Trans-aconitate 2-methyltransferase from Mycobacterium sp. (strain JLS).